We begin with the raw amino-acid sequence, 118 residues long: uncharacterized protein (118 aa).

Transmembrane regions (helical) follow at residues 5 to 20 (IVFY…SVVM), 25 to 42 (VIRT…LLYF), 53 to 73 (ALAI…FIIL), and 83 to 103 (LFFT…SLSI).

The protein localises to the cell membrane. This is an uncharacterized protein from Bacillus subtilis (strain 168).